Consider the following 734-residue polypeptide: Rho GTPase-activating protein gacL (734 aa).

Positions 141-339 (ISLDTLIAKE…QMILHYDTLF (199 aa)) constitute a Rho-GAP domain. WD repeat units follow at residues 381-430 (GHNK…FIKE), 539-579 (LFMK…TIHQ), and 585-623 (KRPK…LEHK).

Its subcellular location is the cytoplasm. In terms of biological role, rho GTPase-activating protein involved in the signal transduction pathway. The sequence is that of Rho GTPase-activating protein gacL (gacL) from Dictyostelium discoideum (Social amoeba).